A 317-amino-acid chain; its full sequence is NADH-quinone oxidoreductase subunit H 1 (317 aa).

8 helical membrane passes run 7–27 (IWVNLILILAVLFAFAAMLSW), 74–94 (AVFVLAPAIVAVTTLLAFAVV), 107–127 (IGVLFFLAMSSLGVYSIVLGG), 147–167 (LSYEVFMGLALMGVVMLAGSF), 179–199 (LWFCIPQILGLATFAVAGIAE), 230–250 (FFIGEYVGITLISAMIVTLFF), 257–277 (VLPPLAWFLLKTFIVIICFVL), and 297–317 (VMLPVTLVNLLLTGAVVLSVA).

It belongs to the complex I subunit 1 family. NDH-1 is composed of 14 different subunits. Subunits NuoA, H, J, K, L, M, N constitute the membrane sector of the complex.

It is found in the cell inner membrane. The enzyme catalyses a quinone + NADH + 5 H(+)(in) = a quinol + NAD(+) + 4 H(+)(out). In terms of biological role, NDH-1 shuttles electrons from NADH, via FMN and iron-sulfur (Fe-S) centers, to quinones in the respiratory chain. The immediate electron acceptor for the enzyme in this species is believed to be ubiquinone. Couples the redox reaction to proton translocation (for every two electrons transferred, four hydrogen ions are translocated across the cytoplasmic membrane), and thus conserves the redox energy in a proton gradient. This subunit may bind ubiquinone. The sequence is that of NADH-quinone oxidoreductase subunit H 1 from Nitrosospira multiformis (strain ATCC 25196 / NCIMB 11849 / C 71).